Reading from the N-terminus, the 385-residue chain is MKNICILGATGSIGTQTLDVIEKESNKFKLVAFSANKSYEKIITIIEKFNPVYGAINDKETFLKVKDHCNINNIKINLLYGMDGLIKISTLEEVELVVTSIVGMIGLVPTLEAINAGKDIALANKETLVTGGELVMKAAKQNNVKILPVDSEHGAIFQCLQGNSYKDIETIYVTASGGPFRQSKLEELINITPEQALKHPKWNMGKKISIDSSTMINKGLEVIEAHWLFNVGYDKIKVLVHPQSIVHSMVEYIDGSIIAQLASTDMRLPIQYALNYPVRNKKVVEKLDVYNMGNLTFEKPDFEKFRGLKLAYEAGKLGGIMPTIFNASNEVAVNMFLNNHIKYLEIVDIVEECMNKFENKSIKDVEDILNAEAKVRSFIKNKYNF.

6 residues coordinate NADPH: threonine 10, glycine 11, serine 12, isoleucine 13, lysine 37, and asparagine 124. Lysine 125 serves as a coordination point for 1-deoxy-D-xylulose 5-phosphate. Residue glutamate 126 participates in NADPH binding. Aspartate 150 is a Mn(2+) binding site. The 1-deoxy-D-xylulose 5-phosphate site is built by serine 151, glutamate 152, serine 176, and histidine 199. Residue glutamate 152 coordinates Mn(2+). Residue glycine 205 participates in NADPH binding. Positions 212, 217, 218, and 221 each coordinate 1-deoxy-D-xylulose 5-phosphate. Residue glutamate 221 participates in Mn(2+) binding.

This sequence belongs to the DXR family. Requires Mg(2+) as cofactor. It depends on Mn(2+) as a cofactor.

It carries out the reaction 2-C-methyl-D-erythritol 4-phosphate + NADP(+) = 1-deoxy-D-xylulose 5-phosphate + NADPH + H(+). It functions in the pathway isoprenoid biosynthesis; isopentenyl diphosphate biosynthesis via DXP pathway; isopentenyl diphosphate from 1-deoxy-D-xylulose 5-phosphate: step 1/6. Catalyzes the NADPH-dependent rearrangement and reduction of 1-deoxy-D-xylulose-5-phosphate (DXP) to 2-C-methyl-D-erythritol 4-phosphate (MEP). The protein is 1-deoxy-D-xylulose 5-phosphate reductoisomerase of Clostridium novyi (strain NT).